A 137-amino-acid polypeptide reads, in one-letter code: Holo-[acyl-carrier-protein] synthase (137 aa).

The Mg(2+) site is built by Asp7 and Glu58.

Belongs to the P-Pant transferase superfamily. AcpS family. It depends on Mg(2+) as a cofactor.

It is found in the cytoplasm. It catalyses the reaction apo-[ACP] + CoA = holo-[ACP] + adenosine 3',5'-bisphosphate + H(+). Functionally, transfers the 4'-phosphopantetheine moiety from coenzyme A to a Ser of acyl-carrier-protein. In Chloroflexus aurantiacus (strain ATCC 29366 / DSM 635 / J-10-fl), this protein is Holo-[acyl-carrier-protein] synthase.